Reading from the N-terminus, the 81-residue chain is HssA/B-like protein 5 (81 aa).

The protein belongs to the hssA/B family.

In Dictyostelium discoideum (Social amoeba), this protein is HssA/B-like protein 5 (hssl5).